A 119-amino-acid chain; its full sequence is uncharacterized protein (119 aa).

A run of 3 helical transmembrane segments spans residues 28 to 48 (AWTTGIWLIALCYEIVSHLVF), 55 to 75 (IEVVHGWVYFVYVLTAFNLAI), and 80 to 100 (PIGKTVGVLLAGTVPLLGIIV).

The protein to M.tuberculosis Rv1342c.

The protein localises to the cell membrane. This is an uncharacterized protein from Mycobacterium leprae (strain TN).